Reading from the N-terminus, the 217-residue chain is 3,4-dihydroxy-2-butanone 4-phosphate synthase (217 aa).

D-ribulose 5-phosphate-binding positions include 37–38 (RE), aspartate 42, 150–154 (RRGHT), and glutamate 174. Mg(2+) is bound at residue glutamate 38. Position 153 (histidine 153) interacts with Mg(2+).

The protein belongs to the DHBP synthase family. In terms of assembly, homodimer. It depends on Mg(2+) as a cofactor. Requires Mn(2+) as cofactor.

It carries out the reaction D-ribulose 5-phosphate = (2S)-2-hydroxy-3-oxobutyl phosphate + formate + H(+). The protein operates within cofactor biosynthesis; riboflavin biosynthesis; 2-hydroxy-3-oxobutyl phosphate from D-ribulose 5-phosphate: step 1/1. Its function is as follows. Catalyzes the conversion of D-ribulose 5-phosphate to formate and 3,4-dihydroxy-2-butanone 4-phosphate. The protein is 3,4-dihydroxy-2-butanone 4-phosphate synthase of Shewanella baltica (strain OS223).